Reading from the N-terminus, the 759-residue chain is LON peptidase N-terminal domain and RING finger protein 3 (759 aa).

A disordered region spans residues Met1–Val69. Residues Glu57–Glu66 are compositionally biased toward polar residues. One copy of the TPR 1 repeat lies at Ser67–Val100. The RING-type 1 zinc-finger motif lies at Cys158–Gly196. TPR repeat units follow at residues Ala243–Asp276, Leu278–Gly310, and Lys312–Asn344. Residues His360 to Ser454 form a disordered region. Over residues Ala380–Asp393 the composition is skewed to basic and acidic residues. Residues Cys467–Lys505 form an RING-type 2 zinc finger. Residues Met546–Ser755 form the Lon N-terminal domain.

This chain is LON peptidase N-terminal domain and RING finger protein 3 (LONRF3), found in Homo sapiens (Human).